Reading from the N-terminus, the 985-residue chain is Protein psiQ (985 aa).

A signal peptide spans 1–20 (MMKYIYILLIFSLLFLKINS). The PA14 domain occupies 102 to 247 (QSTTNPNVYA…YDECGVCQGD (146 aa)). N-linked (GlcNAc...) asparagine glycosylation is found at asparagine 127, asparagine 309, asparagine 424, asparagine 491, asparagine 517, asparagine 527, asparagine 592, asparagine 620, asparagine 649, asparagine 696, asparagine 735, asparagine 767, asparagine 786, asparagine 824, and asparagine 842.

The protein belongs to the prespore-cell-inducing factor family.

The protein resides in the secreted. In Dictyostelium discoideum (Social amoeba), this protein is Protein psiQ (psiQ).